Consider the following 293-residue polypeptide: Bifunctional protein FolD (293 aa).

Residues 165 to 167, T194, and V235 contribute to the NADP(+) site; that span reads GRS.

It belongs to the tetrahydrofolate dehydrogenase/cyclohydrolase family. As to quaternary structure, homodimer.

It carries out the reaction (6R)-5,10-methylene-5,6,7,8-tetrahydrofolate + NADP(+) = (6R)-5,10-methenyltetrahydrofolate + NADPH. The enzyme catalyses (6R)-5,10-methenyltetrahydrofolate + H2O = (6R)-10-formyltetrahydrofolate + H(+). The protein operates within one-carbon metabolism; tetrahydrofolate interconversion. Its function is as follows. Catalyzes the oxidation of 5,10-methylenetetrahydrofolate to 5,10-methenyltetrahydrofolate and then the hydrolysis of 5,10-methenyltetrahydrofolate to 10-formyltetrahydrofolate. The polypeptide is Bifunctional protein FolD (Syntrophus aciditrophicus (strain SB)).